The following is a 545-amino-acid chain: Zinc finger protein with KRAB and SCAN domains 4 (545 aa).

Residues 1–22 are disordered; the sequence is MAREPRKNAALDAQSAEDQTGL. Glycyl lysine isopeptide (Lys-Gly) (interchain with G-Cter in SUMO2) cross-links involve residues K26 and K29. Residues 34–55 form a disordered region; the sequence is ALTAEVRAPCSPARGPERSRQR. In terms of domain architecture, SCAN box spans 53–135; sequence RQRFRGFRYP…VLLEYLERQL (83 aa). Glycyl lysine isopeptide (Lys-Gly) (interchain with G-Cter in SUMO2) cross-links involve residues K178 and K222. The region spanning 221-317 is the KRAB domain; it reads LKMEDVALTL…QRKQKNAIGS (97 aa). 5 C2H2-type zinc fingers span residues 320 to 342, 348 to 370, 376 to 398, 404 to 426, and 432 to 454; these read HYCHECGKSFAQSSGLTKHRRIH, YECEDCGKTFIGSSALVIHQRVH, YECEECGKVFSHSSNLIKHQRTH, YECDDCGKTFSQSCSLLEHHKIH, and YQCNMCGKAFRRNSHLLRHQRIH. Basic and acidic residues predominate over residues 455 to 467; that stretch reads GDKNVQNPEHGES. Residues 455-480 form a disordered region; the sequence is GDKNVQNPEHGESWESQGRTESQWEN. The segment covering 468 to 480 has biased composition (polar residues); that stretch reads WESQGRTESQWEN. 2 C2H2-type zinc fingers span residues 487 to 509 and 515 to 537; these read YKCNECERSFTRNRSLIEHQKIH and YQCDTCGKGFTRTSYLVQHQRSH.

The protein belongs to the krueppel C2H2-type zinc-finger protein family. In terms of tissue distribution, expressed in adult heart, brain, placenta, lung and kidney, but not in adult liver and skeletal muscle. In 17-day old embryo, detected in liver, skeletal muscle, brain, heart and small intestine.

The protein resides in the nucleus. In terms of biological role, may be involved in the transcriptional activation of MDM2 and EP300 genes. The protein is Zinc finger protein with KRAB and SCAN domains 4 (ZKSCAN4) of Homo sapiens (Human).